Here is a 122-residue protein sequence, read N- to C-terminus: Small ribosomal subunit protein uS13 (122 aa).

Residues 99 to 122 (RGQRTHTNARTRKGPAKAIAGKKK) form a disordered region.

This sequence belongs to the universal ribosomal protein uS13 family. In terms of assembly, part of the 30S ribosomal subunit. Forms a loose heterodimer with protein S19. Forms two bridges to the 50S subunit in the 70S ribosome.

Its function is as follows. Located at the top of the head of the 30S subunit, it contacts several helices of the 16S rRNA. In the 70S ribosome it contacts the 23S rRNA (bridge B1a) and protein L5 of the 50S subunit (bridge B1b), connecting the 2 subunits; these bridges are implicated in subunit movement. Contacts the tRNAs in the A and P-sites. In Rhizobium leguminosarum bv. trifolii (strain WSM2304), this protein is Small ribosomal subunit protein uS13.